The following is a 37-amino-acid chain: Large ribosomal subunit protein bL36 (37 aa).

It belongs to the bacterial ribosomal protein bL36 family.

The polypeptide is Large ribosomal subunit protein bL36 (Paracidovorax citrulli (strain AAC00-1) (Acidovorax citrulli)).